The primary structure comprises 362 residues: Putative protein ARB2BP (362 aa).

A helical membrane pass occupies residues 229–245; it reads IAFIVHGYGGLVFMDLL.

It belongs to the ARB2 family.

Its subcellular location is the membrane. This chain is Putative protein ARB2BP, found in Homo sapiens (Human).